Consider the following 90-residue polypeptide: MAVKIRLKRIGSKKKPFYRIVVADSRFPRDGRSIETIGTYNPLLDPVEVKIDEEATLKWMHNGAKPSDTVRNLLSREGIMEKFHNQKLGK.

Belongs to the bacterial ribosomal protein bS16 family.

The protein is Small ribosomal subunit protein bS16 of Listeria monocytogenes serotype 4b (strain F2365).